The following is a 185-amino-acid chain: MAGRLSFDMNEEACVYHVKDKHRDRKRIKKFLCGMDSLNKTTNVSEKVIDGFIEMDIDIEVENGRVTPITADEYIEDIAAMDDRFEVLYWLIIIGGDANRWRELRRECINHYNKVKVCNKMVNEYEYGFTIIESDDDEQGISGGWPKTSSSYRKDRWKLQNILTKERPGLTALFIFMMRLAGDYY.

This is an uncharacterized protein from Magallana gigas (Pacific oyster).